Reading from the N-terminus, the 862-residue chain is FAS1 domain-containing protein YLR001C (862 aa).

The first 23 residues, 1-23 (MNMAIQTIKYIFWLLPILGLTQA), serve as a signal peptide directing secretion. Over 24 to 762 (LLQNPGDDFP…KYHLRLPGIA (739 aa)) the chain is Vacuolar. The 129-residue stretch at 34–162 (FSTVIDILSE…ASLQGINNLL (129 aa)) folds into the FAS1 1 domain. 13 N-linked (GlcNAc...) asparagine glycosylation sites follow: Asn68, Asn112, Asn152, Asn200, Asn291, Asn333, Asn450, Asn521, Asn542, Asn569, Asn663, Asn679, and Asn688. FAS1 domains follow at residues 463–604 (PGDL…DQLD) and 606–744 (PVDL…DKPI). Residues 763–783 (VGFGVIIGVTIAISLLFCIII) form a helical membrane-spanning segment. The Cytoplasmic portion of the chain corresponds to 784-862 (TRGGKVKDKN…QKGGRSVSTS (79 aa)).

The protein resides in the vacuole membrane. This is FAS1 domain-containing protein YLR001C from Saccharomyces cerevisiae (strain ATCC 204508 / S288c) (Baker's yeast).